Reading from the N-terminus, the 301-residue chain is Quinolinate synthase (301 aa).

Iminosuccinate-binding residues include His21 and Ser38. Cys83 lines the [4Fe-4S] cluster pocket. Iminosuccinate contacts are provided by residues 109 to 111 (YIN) and Ser126. Cys169 contacts [4Fe-4S] cluster. Iminosuccinate-binding positions include 195–197 (HPE) and Thr212. Residue Cys257 coordinates [4Fe-4S] cluster.

This sequence belongs to the quinolinate synthase family. Type 2 subfamily. Requires [4Fe-4S] cluster as cofactor.

It is found in the cytoplasm. It catalyses the reaction iminosuccinate + dihydroxyacetone phosphate = quinolinate + phosphate + 2 H2O + H(+). Its pathway is cofactor biosynthesis; NAD(+) biosynthesis; quinolinate from iminoaspartate: step 1/1. Functionally, catalyzes the condensation of iminoaspartate with dihydroxyacetone phosphate to form quinolinate. The polypeptide is Quinolinate synthase (Clostridium perfringens (strain ATCC 13124 / DSM 756 / JCM 1290 / NCIMB 6125 / NCTC 8237 / Type A)).